The primary structure comprises 377 residues: Geranylgeranyl transferase type-1 subunit beta (377 aa).

PFTB repeat units follow at residues 144–186 (KEAC…YMLN), 193–234 (MKKA…CLMG), 245–284 (LNRI…KLLK), and 291–333 (FEKN…SLME). Geranylgeranyl diphosphate contacts are provided by residues 219-221 (HGG) and 263-266 (RPNK). Zn(2+)-binding residues include aspartate 269 and cysteine 271. A geranylgeranyl diphosphate-binding site is contributed by 272–275 (YSFW). Residue histidine 321 coordinates Zn(2+).

Belongs to the protein prenyltransferase subunit beta family. Heterodimer of FNTA and PGGT1B. PGGT1B mediates interaction with substrate peptides. Zn(2+) is required as a cofactor. Requires Mg(2+) as cofactor.

It catalyses the reaction geranylgeranyl diphosphate + L-cysteinyl-[protein] = S-geranylgeranyl-L-cysteinyl-[protein] + diphosphate. Catalyzes the transfer of a geranyl-geranyl moiety from geranyl-geranyl pyrophosphate to a cysteine at the fourth position from the C-terminus of proteins having the C-terminal sequence Cys-aliphatic-aliphatic-X. Known substrates include RAC1, RAC2, RAP1A and RAP1B. The polypeptide is Geranylgeranyl transferase type-1 subunit beta (PGGT1B) (Homo sapiens (Human)).